A 57-amino-acid polypeptide reads, in one-letter code: uncharacterized protein (57 aa).

Residues 1-57 (MANHRGGSGNFAEDRERASEAGKKGGQHSGGNFKNDPQRASEAGKKGGKSSHGKSDN) form a disordered region. Basic and acidic residues-rich tracts occupy residues 12 to 23 (AEDRERASEAGK) and 36 to 45 (DPQRASEAGK). Positions 46–57 (KGGKSSHGKSDN) are enriched in basic residues.

This sequence belongs to the con-10 family.

This is an uncharacterized protein from Escherichia coli (strain K12).